Reading from the N-terminus, the 30-residue chain is Nattererin-2 (30 aa).

In terms of tissue distribution, expressed by the skin glands.

The protein resides in the secreted. Functionally, probably has antibacterial activity. The protein is Nattererin-2 of Physalaemus nattereri (Cuyaba dwarf frog).